A 230-amino-acid chain; its full sequence is MKEERPIIALDFSSFEETKAFLDLFPAEEKLYVKIGMELYYAQGPDIVRYIKSLGHNVFLDLKLHDIPNTVRAAMAVLKELDIDMATVHAAGGVEMLKAAREGLGQGPTLIAVTQLTSTSEDQMRGDQNIQTSLLESVLHYSKGAAKAQLDGAVCSAQEVEAIKAVTPTGFTCLTPGIRPKGSNIGDQKRVMTPNQARRIGSDYIVVGRPITQAKDPVAAYQAIKAEWAG.

Residues Asp11, Lys34, 61–70, Thr117, Arg179, Gln188, Gly208, and Arg209 each bind substrate; that span reads DLKLHDIPNT. The Proton donor role is filled by Lys63.

Belongs to the OMP decarboxylase family. Type 1 subfamily. In terms of assembly, homodimer.

The catalysed reaction is orotidine 5'-phosphate + H(+) = UMP + CO2. Its pathway is pyrimidine metabolism; UMP biosynthesis via de novo pathway; UMP from orotate: step 2/2. Catalyzes the decarboxylation of orotidine 5'-monophosphate (OMP) to uridine 5'-monophosphate (UMP). The sequence is that of Orotidine 5'-phosphate decarboxylase from Streptococcus pyogenes serotype M1.